The following is a 1993-amino-acid chain: Otoferlin (1993 aa).

The C2 1 domain maps to 1–98; that stretch reads MALIVHLKTV…VEENRVEVSD (98 aa). Residues 1–1959 lie on the Cytoplasmic side of the membrane; it reads MALIVHLKTV…IKYLICTRYK (1959 aa). The tract at residues 127–212 is disordered; that stretch reads PWDDGDFLGD…KEEPQRQDEP (86 aa). The segment covering 129 to 145 has biased composition (acidic residues); the sequence is DDGDFLGDESLQEEEKD. Basic and acidic residues-rich tracts occupy residues 163–186 and 202–211; these read PGEKSFRSKGKEKTKGGRDGEHKA and HKEEPQRQDE. C2 domains are found at residues 251-372 and 415-546; these read KRSK…HKWA and IEGN…FLPT. A disordered region spans residues 654-708; the sequence is NYGNEVDGTSRPQRPRPRKEPGDEEEVDLIQNSSDDEGDEAGDLASVSSTPPMRP. Acidic residues predominate over residues 675–695; sequence GDEEEVDLIQNSSDDEGDEAG. A coiled-coil region spans residues 807 to 836; that stretch reads RERLKSCMRELESMGQQAKSLRAQVKRHTV. C2 domains lie at 959–1084 and 1131–1257; these read LHSF…PPRF and RGPI…ANWN. Residues D991, D997, D1053, D1055, and D1061 each coordinate Ca(2+). Disordered regions lie at residues 1294 to 1318 and 1339 to 1398; these read AEDEKERKKKKKKGPSEEAEEEEPD and LRQH…EKKK. Residues 1348 to 1357 show a composition bias toward acidic residues; it reads DLEEKEEMDS. Residues 1366 to 1379 are compositionally biased toward basic and acidic residues; that stretch reads KNKEKSRAAKEEKK. C2 domains follow at residues 1460–1589 and 1710–1861; these read LPED…ATCG and DMPA…KQCT. Ca(2+) is bound by residues D1504, D1510, D1559, D1561, D1567, D1832, S1835, and D1838. The chain crosses the membrane as a helical span at residues 1960–1980; it reads WLIIKIVLALLGLLMLALFLY. Residues 1981 to 1993 lie on the Extracellular side of the membrane; the sequence is SLPGYMVKKLLGA.

It belongs to the ferlin family. As to quaternary structure, interacts with SNAP25; the interaction is direct. Interacts with STX1; the interaction is direct. Interacts with RAB8B. Requires Ca(2+) as cofactor. As to expression, isoform 1 is expressed in the cochlea and brain. Expressed in cerebellum (Purkinje cells), hippocampus (granule cells of the dentate gyrus and in pyramidal cells of the CA1-CA3 region) and cortex (stellate and pyramidal cells). Expressed in hair cells of vestibular organs such as the saccule, utricle and crista ampullari. Expressed in the cochlear inner and outer cells (IHCs and OHCs) (at protein level). Expressed in brain: brainstem, cerebellum (granules cells and Purkinje cell layer), cortex (layers IV and V), inferior colliculus, superior colliculus and hippocampus (granule cells of the dentate gyrus and in pyramidal cells of the CA1-CA3 region).

It localises to the cytoplasmic vesicle. It is found in the secretory vesicle. The protein localises to the synaptic vesicle membrane. The protein resides in the basolateral cell membrane. Its subcellular location is the endoplasmic reticulum membrane. It localises to the golgi apparatus membrane. It is found in the presynaptic cell membrane. The protein localises to the cell membrane. Functionally, key calcium ion sensor involved in the Ca(2+)-triggered synaptic vesicle-plasma membrane fusion and in the control of neurotransmitter release at these output synapses. Interacts in a calcium-dependent manner to the presynaptic SNARE proteins at ribbon synapses of cochlear inner hair cells (IHCs) to trigger exocytosis of neurotransmitter. Also essential to synaptic exocytosis in immature outer hair cells (OHCs). May also play a role within the recycling of endosomes. The polypeptide is Otoferlin (Otof) (Rattus norvegicus (Rat)).